Reading from the N-terminus, the 314-residue chain is 1,4-dihydroxy-2-naphthoyl-CoA synthase (314 aa).

Substrate is bound by residues R58, 103–107, Y115, 157–161, T184, S190, Y287, and K302; these read SGGDQ and WAAGG.

The protein belongs to the enoyl-CoA hydratase/isomerase family. MenB subfamily.

The catalysed reaction is 2-succinylbenzoyl-CoA + H(+) = 1,4-dihydroxy-2-naphthoyl-CoA + H2O. It participates in quinol/quinone metabolism; 1,4-dihydroxy-2-naphthoate biosynthesis; 1,4-dihydroxy-2-naphthoate from chorismate: step 6/7. The protein operates within quinol/quinone metabolism; menaquinone biosynthesis. Functionally, converts o-succinylbenzoyl-CoA (OSB-CoA) to 1,4-dihydroxy-2-naphthoyl-CoA (DHNA-CoA). The sequence is that of 1,4-dihydroxy-2-naphthoyl-CoA synthase from Mycobacterium tuberculosis (strain CDC 1551 / Oshkosh).